Consider the following 364-residue polypeptide: Protein FAM81A (364 aa).

Positions 80–107 (IRNITAIVKQLNRDIEVLQEQIRARDNI) form a coiled coil. The span at 275–300 (ARLDKIEESQRRNAEGQRKPEEEKVH) shows a compositional bias: basic and acidic residues. The tract at residues 275 to 301 (ARLDKIEESQRRNAEGQRKPEEEKVHG) is disordered.

It belongs to the FAM81 family. Interacts with DLG4/PSD-95, GRIN2B/GLUN2B and SYNGAP1; the interactions facilitate condensate formation. As to expression, highly expressed in brain (at protein level).

The protein localises to the postsynaptic density. It localises to the cytoplasm. Facilitates the interaction and assembly of proteins within the postsynaptic density by promoting the condensation of postsynaptic proteins via liquid-liquid phase separation. Required for neuronal activity. Accumulation at the postsynaptic density results in enlargement of dendritic spines. The protein is Protein FAM81A of Rattus norvegicus (Rat).